A 286-amino-acid chain; its full sequence is Expansin-like protein 1 (286 aa).

Positions 1-21 are cleaved as a signal peptide; sequence MKTFVLFVILLCLTFLSISKS. At 22–265 the chain is on the extracellular side; sequence ETCPFSQSLV…TGASIGTPSD (244 aa). An Expansin-like EG45 domain is found at 44–145; it reads AGNCGYENLM…YKVPCGVNGN (102 aa). 2 cysteine pairs are disulfide-bonded: cysteine 47/cysteine 77 and cysteine 80/cysteine 140. 2 N-linked (GlcNAc...) asparagine glycosylation sites follow: asparagine 82 and asparagine 89. A helical membrane pass occupies residues 266 to 286; the sequence is ASSLTLYALFSLTILFLVMLN.

This sequence belongs to the expansin family. Expansin A subfamily.

It is found in the membrane. Functionally, may serve to lubricate the movement of the cellulose microfibrils during cell growth and wall extension and/or they may serve to maintain the fluid state of the slug cell wall. The sequence is that of Expansin-like protein 1 (expl1) from Dictyostelium discoideum (Social amoeba).